The sequence spans 276 residues: Digeranylgeranylglyceryl phosphate synthase (276 aa).

Helical transmembrane passes span 14–34 (VNTL…GGAV), 90–110 (VVLF…AVCI), 144–164 (FVFG…AALA), 200–220 (ALAV…VPYL), and 221–241 (VGVF…VMVV).

This sequence belongs to the UbiA prenyltransferase family. DGGGP synthase subfamily. Requires Mg(2+) as cofactor.

The protein localises to the cell membrane. The catalysed reaction is sn-3-O-(geranylgeranyl)glycerol 1-phosphate + (2E,6E,10E)-geranylgeranyl diphosphate = 2,3-bis-O-(geranylgeranyl)-sn-glycerol 1-phosphate + diphosphate. It functions in the pathway membrane lipid metabolism; glycerophospholipid metabolism. Functionally, prenyltransferase that catalyzes the transfer of the geranylgeranyl moiety of geranylgeranyl diphosphate (GGPP) to the C2 hydroxyl of (S)-3-O-geranylgeranylglyceryl phosphate (GGGP). This reaction is the second ether-bond-formation step in the biosynthesis of archaeal membrane lipids. The chain is Digeranylgeranylglyceryl phosphate synthase from Halobacterium salinarum (strain ATCC 29341 / DSM 671 / R1).